The chain runs to 201 residues: Small ribosomal subunit protein uS4c (201 aa).

The 64-residue stretch at 90-153 folds into the S4 RNA-binding domain; it reads MRLDNVIFRL…SSQNLVKRYL (64 aa).

The protein belongs to the universal ribosomal protein uS4 family. In terms of assembly, part of the 30S ribosomal subunit. Contacts protein S5. The interaction surface between S4 and S5 is involved in control of translational fidelity.

It localises to the plastid. It is found in the chloroplast. Its function is as follows. One of the primary rRNA binding proteins, it binds directly to 16S rRNA where it nucleates assembly of the body of the 30S subunit. With S5 and S12 plays an important role in translational accuracy. This Gracilaria tenuistipitata var. liui (Red alga) protein is Small ribosomal subunit protein uS4c (rps4).